Consider the following 287-residue polypeptide: ATP synthase gamma chain (287 aa).

Belongs to the ATPase gamma chain family. As to quaternary structure, F-type ATPases have 2 components, CF(1) - the catalytic core - and CF(0) - the membrane proton channel. CF(1) has five subunits: alpha(3), beta(3), gamma(1), delta(1), epsilon(1). CF(0) has three main subunits: a, b and c.

It localises to the cell inner membrane. Its function is as follows. Produces ATP from ADP in the presence of a proton gradient across the membrane. The gamma chain is believed to be important in regulating ATPase activity and the flow of protons through the CF(0) complex. The protein is ATP synthase gamma chain of Shigella boydii serotype 4 (strain Sb227).